Here is a 297-residue protein sequence, read N- to C-terminus: UDP-N-acetylenolpyruvoylglucosamine reductase (297 aa).

Positions 22–195 constitute an FAD-binding PCMH-type domain; it reads RAGGTARYYA…LAGRFRLQRG (174 aa). The active site involves Arg169. Ser223 (proton donor) is an active-site residue. Residue Glu293 is part of the active site.

The protein belongs to the MurB family. FAD is required as a cofactor.

It is found in the cytoplasm. The enzyme catalyses UDP-N-acetyl-alpha-D-muramate + NADP(+) = UDP-N-acetyl-3-O-(1-carboxyvinyl)-alpha-D-glucosamine + NADPH + H(+). Its pathway is cell wall biogenesis; peptidoglycan biosynthesis. Its function is as follows. Cell wall formation. This chain is UDP-N-acetylenolpyruvoylglucosamine reductase, found in Chloroflexus aurantiacus (strain ATCC 29364 / DSM 637 / Y-400-fl).